We begin with the raw amino-acid sequence, 492 residues long: GTPase Der (492 aa).

EngA-type G domains follow at residues phenylalanine 3–alanine 167 and leucine 201–asparagine 381. GTP is bound by residues glycine 9–serine 16, aspartate 56–leucine 60, asparagine 119–glutamate 122, glycine 207–serine 214, aspartate 259–methionine 263, and asparagine 324–aspartate 327. The region spanning arginine 382–alanine 468 is the KH-like domain. Residues methionine 462–aspartate 492 are disordered. Residues lysine 472–aspartate 492 are compositionally biased toward basic residues.

Belongs to the TRAFAC class TrmE-Era-EngA-EngB-Septin-like GTPase superfamily. EngA (Der) GTPase family. As to quaternary structure, associates with the 50S ribosomal subunit.

GTPase that plays an essential role in the late steps of ribosome biogenesis. This Roseobacter denitrificans (strain ATCC 33942 / OCh 114) (Erythrobacter sp. (strain OCh 114)) protein is GTPase Der.